The following is a 215-amino-acid chain: Translation initiation factor IF-3 (215 aa).

The interval 159–215 is disordered; it reads SAEVQQPPKREGRNMIMFLGPRKTPLQKDKPEQATKAERTLPIAKPPGKTAAPAAAN. Over residues 184 to 197 the composition is skewed to basic and acidic residues; the sequence is LQKDKPEQATKAER. The span at 200 to 215 shows a compositional bias: low complexity; sequence PIAKPPGKTAAPAAAN.

It belongs to the IF-3 family. In terms of assembly, monomer.

It localises to the cytoplasm. In terms of biological role, IF-3 binds to the 30S ribosomal subunit and shifts the equilibrium between 70S ribosomes and their 50S and 30S subunits in favor of the free subunits, thus enhancing the availability of 30S subunits on which protein synthesis initiation begins. This chain is Translation initiation factor IF-3, found in Synechococcus sp. (strain RCC307).